The chain runs to 310 residues: tRNA dimethylallyltransferase (310 aa).

24–31 (GPTASGKT) is an ATP binding site. 26–31 (TASGKT) is a substrate binding site. The tract at residues 49-52 (DSRQ) is interaction with substrate tRNA.

It belongs to the IPP transferase family. As to quaternary structure, monomer. It depends on Mg(2+) as a cofactor.

The enzyme catalyses adenosine(37) in tRNA + dimethylallyl diphosphate = N(6)-dimethylallyladenosine(37) in tRNA + diphosphate. Functionally, catalyzes the transfer of a dimethylallyl group onto the adenine at position 37 in tRNAs that read codons beginning with uridine, leading to the formation of N6-(dimethylallyl)adenosine (i(6)A). The chain is tRNA dimethylallyltransferase from Synechococcus sp. (strain CC9311).